Reading from the N-terminus, the 396-residue chain is MSLALYTCLLWLCTSGLWTAQASTNESSNSHRGLAPTNVDFAFNLYQRLVALNPDKNTLISPVSISMALAMVSLGSAQTQSLQSLGFNLTETSEAEIHQSFQYLNYLLKQSDTGLEMNMGNAMFLLQKLKLKDSFLADVKQYYESEALAIDFEDWTKASQQINQHVKDKTQGKIEHVFSDLDSPASFILVNYIFLRGIWELPFSPENTREEDFYVNETSTVKVPMMVQSGSIGYFRDSVFPCQLIQMDYVGNGTAFFILPDQGQMDTVIAALSRDTIDRWGKLMTPRQVNLYIPKFSISDTYDLKDMLEDLNIKDLLTNQSDFSGNTKDVPLTLTMVHKAMLQLDEGNVLPNSTNGAPLHLRSEPLDIKFNKPFILLLFDKFTWSSLMMSQVVNPA.

The first 22 residues, 1 to 22 (MSLALYTCLLWLCTSGLWTAQA), serve as a signal peptide directing secretion. 2 N-linked (GlcNAc...) asparagine glycosylation sites follow: Asn88 and Asn216. Residue Gln246 participates in cortisol binding. Residue Asn252 is glycosylated (N-linked (GlcNAc...) asparagine). Asp278 serves as a coordination point for cortisol. 2 N-linked (GlcNAc...) asparagine glycosylation sites follow: Asn319 and Asn352. Residue Trp384 participates in cortisol binding.

It belongs to the serpin family. As to expression, expressed by the liver; secreted in plasma.

It is found in the secreted. Major transport protein for glucocorticoids and progestins in the blood of almost all vertebrate species. The polypeptide is Corticosteroid-binding globulin (Serpina6) (Rattus norvegicus (Rat)).